Reading from the N-terminus, the 336-residue chain is Cytosolic 5'-nucleotidase 3A (336 aa).

The active-site Nucleophile is the Asp88. The Mg(2+) site is built by Asp88 and Asp90. The Proton donor role is filled by Asp90. Position 135 (Glu135) interacts with CMP. Positions 135 and 156 each coordinate N(7)-methyl-GMP. Substrate is bound by residues 203 to 204 (SA) and Lys252. Asp277 is a Mg(2+) binding site. Ser278 is modified (phosphoserine).

It belongs to the pyrimidine 5'-nucleotidase family. As to quaternary structure, monomer. As to expression, isoforms 1, 3 and 4 are expressed in reticulocytes. Isoform 4 is hardly detectable in bone marrow and fetal liver.

The protein localises to the cytoplasm. The protein resides in the endoplasmic reticulum. It carries out the reaction N(7)-methyl-GMP + H2O = N(7)-methylguanosine + phosphate. It catalyses the reaction CMP + H2O = cytidine + phosphate. The catalysed reaction is a ribonucleoside 5'-phosphate + H2O = a ribonucleoside + phosphate. Nucleotidase which shows specific activity towards cytidine monophosphate (CMP) and 7-methylguanosine monophosphate (m(7)GMP). CMP seems to be the preferred substrate. This is Cytosolic 5'-nucleotidase 3A (NT5C3A) from Homo sapiens (Human).